A 71-amino-acid chain; its full sequence is Large ribosomal subunit protein bL31 (71 aa).

This sequence belongs to the bacterial ribosomal protein bL31 family. Type A subfamily. In terms of assembly, part of the 50S ribosomal subunit.

Functionally, binds the 23S rRNA. The protein is Large ribosomal subunit protein bL31 of Metamycoplasma arthritidis (strain 158L3-1) (Mycoplasma arthritidis).